A 216-amino-acid chain; its full sequence is Uracil phosphoribosyltransferase (216 aa).

GTP is bound by residues Arg32, Arg41, 75–78, and Lys77; that span reads LGKI. Arg85 contacts 5-phospho-alpha-D-ribose 1-diphosphate. Arg102 contacts GTP. Arg110 is a binding site for 5-phospho-alpha-D-ribose 1-diphosphate. Arg131 lines the GTP pocket. 5-phospho-alpha-D-ribose 1-diphosphate contacts are provided by residues Asp137 and 137–145; that span reads DPMLATGGS. D-ribose 5-phosphate is bound at residue Tyr201. Residues Leu202 and 207-209 contribute to the uracil site; that span reads GDF. Residue Asp208 coordinates 5-phospho-alpha-D-ribose 1-diphosphate.

Belongs to the UPRTase family. Mg(2+) serves as cofactor.

It carries out the reaction UMP + diphosphate = 5-phospho-alpha-D-ribose 1-diphosphate + uracil. The protein operates within pyrimidine metabolism; UMP biosynthesis via salvage pathway; UMP from uracil: step 1/1. Allosterically activated by GTP. Functionally, catalyzes the conversion of uracil and 5-phospho-alpha-D-ribose 1-diphosphate (PRPP) to UMP and diphosphate. This Lachancea kluyveri (Yeast) protein is Uracil phosphoribosyltransferase (FUR1).